The chain runs to 125 residues: Small ribosomal subunit protein uS13 (125 aa).

A disordered region spans residues 94-125; that stretch reads SLPVRGQRTRTNARTRKGKRKTVAGKKKAVKK.

Belongs to the universal ribosomal protein uS13 family. In terms of assembly, part of the 30S ribosomal subunit. Forms a loose heterodimer with protein S19. Forms two bridges to the 50S subunit in the 70S ribosome.

Functionally, located at the top of the head of the 30S subunit, it contacts several helices of the 16S rRNA. In the 70S ribosome it contacts the 23S rRNA (bridge B1a) and protein L5 of the 50S subunit (bridge B1b), connecting the 2 subunits; these bridges are implicated in subunit movement. Contacts the tRNAs in the A and P-sites. In Chlorobium chlorochromatii (strain CaD3), this protein is Small ribosomal subunit protein uS13.